A 280-amino-acid chain; its full sequence is ESX-1 secretion-associated protein EspJ (280 aa).

Ser-70 bears the Phosphoserine mark. Composition is skewed to low complexity over residues 167–181 (QTIS…QSAQ) and 246–280 (PAQA…TTTL). The tract at residues 167-280 (QTISQTAQQA…TPAPSTTTTL (114 aa)) is disordered.

Residues 76-280 interact with EsxB and an artificial EsxB-EsxA heterodimer. Phosphorylated at Ser-70.

The protein resides in the secreted. Could be involved in regulation of growth and intracellular survival. The polypeptide is ESX-1 secretion-associated protein EspJ (Mycobacterium tuberculosis (strain ATCC 25618 / H37Rv)).